A 168-amino-acid polypeptide reads, in one-letter code: G/U mismatch-specific DNA glycosylase (168 aa).

Belongs to the uracil-DNA glycosylase (UDG) superfamily. TDG/mug family. Binds DNA as a monomer.

It is found in the cytoplasm. It catalyses the reaction Specifically hydrolyzes mismatched double-stranded DNA and polynucleotides, releasing free uracil.. Its function is as follows. Excises ethenocytosine and uracil, which can arise by alkylation or deamination of cytosine, respectively, from the corresponding mispairs with guanine in ds-DNA. It is capable of hydrolyzing the carbon-nitrogen bond between the sugar-phosphate backbone of the DNA and the mispaired base. The complementary strand guanine functions in substrate recognition. Required for DNA damage lesion repair in stationary-phase cells. This Citrobacter koseri (strain ATCC BAA-895 / CDC 4225-83 / SGSC4696) protein is G/U mismatch-specific DNA glycosylase.